The sequence spans 587 residues: D-lactate dehydrogenase [cytochrome] 1, mitochondrial (587 aa).

Residues 146-327 form the FAD-binding PCMH-type domain; the sequence is SPEQRPRIIL…TEATVKCHVK (182 aa).

This sequence belongs to the FAD-binding oxidoreductase/transferase type 4 family. It depends on FAD as a cofactor.

It is found in the mitochondrion inner membrane. The catalysed reaction is (R)-lactate + 2 Fe(III)-[cytochrome c] = 2 Fe(II)-[cytochrome c] + pyruvate + 2 H(+). Catalyzes the stereospecific oxidation of D-lactate to pyruvate. In Saccharomyces cerevisiae (strain ATCC 204508 / S288c) (Baker's yeast), this protein is D-lactate dehydrogenase [cytochrome] 1, mitochondrial.